A 424-amino-acid chain; its full sequence is D-inositol 3-phosphate glycosyltransferase (424 aa).

His-16 lines the 1D-myo-inositol 3-phosphate pocket. Residues 22–23 (QP) and Gly-30 contribute to the UDP-N-acetyl-alpha-D-glucosamine site. 1D-myo-inositol 3-phosphate-binding positions include 27–32 (DAGGMN), Lys-85, Tyr-118, Thr-142, and Arg-162. 2 residues coordinate UDP-N-acetyl-alpha-D-glucosamine: Arg-240 and Lys-245. Residues Met-313, Arg-314, and Ala-316 each coordinate Mg(2+). 2 residues coordinate UDP-N-acetyl-alpha-D-glucosamine: Glu-326 and Glu-334. Thr-340 contributes to the Mg(2+) binding site.

This sequence belongs to the glycosyltransferase group 1 family. MshA subfamily. In terms of assembly, homodimer.

It carries out the reaction 1D-myo-inositol 3-phosphate + UDP-N-acetyl-alpha-D-glucosamine = 1D-myo-inositol 2-acetamido-2-deoxy-alpha-D-glucopyranoside 3-phosphate + UDP + H(+). Functionally, catalyzes the transfer of a N-acetyl-glucosamine moiety to 1D-myo-inositol 3-phosphate to produce 1D-myo-inositol 2-acetamido-2-deoxy-glucopyranoside 3-phosphate in the mycothiol biosynthesis pathway. The protein is D-inositol 3-phosphate glycosyltransferase of Jonesia denitrificans (strain ATCC 14870 / DSM 20603 / BCRC 15368 / CIP 55.134 / JCM 11481 / NBRC 15587 / NCTC 10816 / Prevot 55134) (Listeria denitrificans).